Reading from the N-terminus, the 234-residue chain is Purine nucleoside phosphorylase DeoD-type (234 aa).

His-5 lines the a purine D-ribonucleoside pocket. Phosphate-binding positions include Gly-21, Arg-25, Arg-44, and Arg-88 to Thr-91. Residues Glu-178 to Glu-180 and Ser-202 to Asp-203 contribute to the a purine D-ribonucleoside site. The active-site Proton donor is Asp-203.

Belongs to the PNP/UDP phosphorylase family. As to quaternary structure, homohexamer; trimer of homodimers.

The enzyme catalyses a purine D-ribonucleoside + phosphate = a purine nucleobase + alpha-D-ribose 1-phosphate. The catalysed reaction is a purine 2'-deoxy-D-ribonucleoside + phosphate = a purine nucleobase + 2-deoxy-alpha-D-ribose 1-phosphate. Catalyzes the reversible phosphorolytic breakdown of the N-glycosidic bond in the beta-(deoxy)ribonucleoside molecules, with the formation of the corresponding free purine bases and pentose-1-phosphate. The polypeptide is Purine nucleoside phosphorylase DeoD-type (Lactococcus lactis subsp. lactis (strain IL1403) (Streptococcus lactis)).